The chain runs to 92 residues: Large ribosomal subunit protein bL34m (92 aa).

The transit peptide at 1 to 46 directs the protein to the mitochondrion; the sequence is MAFLARCFGCQACRSVALLSGRYLQSRVWMGLPDSWPLLSLQQARG. Ser-71 carries the post-translational modification Phosphoserine.

The protein belongs to the bacterial ribosomal protein bL34 family. In terms of assembly, component of the mitochondrial ribosome large subunit (39S) which comprises a 16S rRNA and about 50 distinct proteins.

It localises to the mitochondrion. This chain is Large ribosomal subunit protein bL34m (Mrpl34), found in Mus musculus (Mouse).